The chain runs to 207 residues: Putative 3-methyladenine DNA glycosylase (207 aa).

This sequence belongs to the DNA glycosylase MPG family.

The protein is Putative 3-methyladenine DNA glycosylase of Burkholderia lata (strain ATCC 17760 / DSM 23089 / LMG 22485 / NCIMB 9086 / R18194 / 383).